We begin with the raw amino-acid sequence, 210 residues long: Uracil phosphoribosyltransferase (210 aa).

5-phospho-alpha-D-ribose 1-diphosphate-binding positions include R78, R103, and 130–138 (DPMLATGGT). Uracil-binding positions include I193 and 198–200 (GDA). Residue D199 participates in 5-phospho-alpha-D-ribose 1-diphosphate binding.

The protein belongs to the UPRTase family. Mg(2+) serves as cofactor.

The catalysed reaction is UMP + diphosphate = 5-phospho-alpha-D-ribose 1-diphosphate + uracil. The protein operates within pyrimidine metabolism; UMP biosynthesis via salvage pathway; UMP from uracil: step 1/1. Allosterically activated by GTP. Catalyzes the conversion of uracil and 5-phospho-alpha-D-ribose 1-diphosphate (PRPP) to UMP and diphosphate. This Xanthomonas campestris pv. campestris (strain 8004) protein is Uracil phosphoribosyltransferase.